Consider the following 368-residue polypeptide: Chorismate synthase (368 aa).

Residue R46 participates in NADP(+) binding. FMN is bound by residues R124–S126, G284, K299–S303, and R326.

The protein belongs to the chorismate synthase family. FMNH2 serves as cofactor.

It catalyses the reaction 5-O-(1-carboxyvinyl)-3-phosphoshikimate = chorismate + phosphate. The protein operates within metabolic intermediate biosynthesis; chorismate biosynthesis; chorismate from D-erythrose 4-phosphate and phosphoenolpyruvate: step 7/7. Catalyzes the anti-1,4-elimination of the C-3 phosphate and the C-6 proR hydrogen from 5-enolpyruvylshikimate-3-phosphate (EPSP) to yield chorismate, which is the branch point compound that serves as the starting substrate for the three terminal pathways of aromatic amino acid biosynthesis. This reaction introduces a second double bond into the aromatic ring system. The polypeptide is Chorismate synthase (Pyrobaculum arsenaticum (strain DSM 13514 / JCM 11321 / PZ6)).